The primary structure comprises 2216 residues: Protein Ycf2 (2216 aa).

Residue 1567–1574 participates in ATP binding; it reads GSIGTGRS.

It belongs to the Ycf2 family.

Its subcellular location is the plastid stroma. Its function is as follows. Probable ATPase of unknown function. Its presence in a non-photosynthetic plant (Epifagus virginiana) and experiments in tobacco indicate that it has an essential function which is probably not related to photosynthesis. In Epifagus virginiana (Beechdrops), this protein is Protein Ycf2.